The chain runs to 151 residues: UPF0178 protein Pfl01_5469 (151 aa).

This sequence belongs to the UPF0178 family.

This chain is UPF0178 protein Pfl01_5469, found in Pseudomonas fluorescens (strain Pf0-1).